The chain runs to 630 residues: FAST kinase domain-containing protein 4 (630 aa).

Residues 560-618 (IAFLRWEFPNFNSRSKDLLGRFVLARRHVLAAGFLVVDVPYYEWLDLKSEWQKSAYLKD) enclose the RAP domain.

This sequence belongs to the FAST kinase family. Expression detected in spleen, testis, colon, heart, smooth muscle, kidney, brain, lung, liver, brown and white adipose tissue with highest expression in testis, heart, smooth muscle and brown adipose tissue.

It is found in the mitochondrion matrix. Functionally, plays a role in processing of mitochondrial RNA precursors and in stabilization of a subset of mature mitochondrial RNA species, such as MT-CO1, MT-CO2, MT-CYB, MT-CO3, MT-ND3, MT-ND5 and MT-ATP8/6. May play a role in cell cycle progression. In Mus musculus (Mouse), this protein is FAST kinase domain-containing protein 4 (Tbrg4).